A 97-amino-acid chain; its full sequence is Cell division topological specificity factor (97 aa).

It belongs to the MinE family.

Functionally, prevents the cell division inhibition by proteins MinC and MinD at internal division sites while permitting inhibition at polar sites. This ensures cell division at the proper site by restricting the formation of a division septum at the midpoint of the long axis of the cell. This chain is Cell division topological specificity factor, found in Rhodospirillum centenum (strain ATCC 51521 / SW).